The chain runs to 191 residues: uncharacterized protein (191 aa).

This is an uncharacterized protein from Arabidopsis thaliana (Mouse-ear cress).